Consider the following 263-residue polypeptide: Hydroxyethylthiazole kinase 1 (263 aa).

Residue Met42 coordinates substrate. 2 residues coordinate ATP: Lys118 and Thr164. Gly191 provides a ligand contact to substrate.

This sequence belongs to the Thz kinase family. The cofactor is Mg(2+).

The enzyme catalyses 5-(2-hydroxyethyl)-4-methylthiazole + ATP = 4-methyl-5-(2-phosphooxyethyl)-thiazole + ADP + H(+). The protein operates within cofactor biosynthesis; thiamine diphosphate biosynthesis; 4-methyl-5-(2-phosphoethyl)-thiazole from 5-(2-hydroxyethyl)-4-methylthiazole: step 1/1. Functionally, catalyzes the phosphorylation of the hydroxyl group of 4-methyl-5-beta-hydroxyethylthiazole (THZ). The protein is Hydroxyethylthiazole kinase 1 of Clostridium botulinum (strain Okra / Type B1).